The sequence spans 183 residues: Ferritin light chain 1 (183 aa).

One can recognise a Ferritin-like diiron domain in the interval 7–156 (QNYSTEVEAA…NHLTNLRRVA (150 aa)). Positions 54, 57, 58, 61, and 64 each coordinate Fe cation.

This sequence belongs to the ferritin family. Oligomer of 24 subunits. There are two types of subunits: L (light) chain and H (heavy) chain. The major chain can be light or heavy, depending on the species and tissue type. The functional molecule forms a roughly spherical shell with a diameter of 12 nm and contains a central cavity into which the insoluble mineral iron core is deposited. Interacts with NCOA4. In terms of tissue distribution, in rat liver, the light chain is the major chain.

It localises to the cytoplasmic vesicle. It is found in the autophagosome. The protein localises to the cytoplasm. Its subcellular location is the autolysosome. Stores iron in a soluble, non-toxic, readily available form. Important for iron homeostasis. Iron is taken up in the ferrous form and deposited as ferric hydroxides after oxidation. Also plays a role in delivery of iron to cells. Mediates iron uptake in capsule cells of the developing kidney. Delivery to lysosomes by the cargo receptor NCOA4 for autophagic degradation and release or iron. The polypeptide is Ferritin light chain 1 (Ftl1) (Rattus norvegicus (Rat)).